The primary structure comprises 613 residues: MLTATPLPHQLLATFLLVLASATQPAVPASTDRAALLAFRASLSPPSRAALSSWSGPLSPSWLGVSLHPATAPAPSVTTPSVAELSLRGLNLTGVIPAAPLALLRRLRTLDLSANALSGELPCSLPRSLLALDLSRNALSGAVPTCLPSSLPALRTLNLSANFLRLPLSPRLSFPARLAALDLSRNAISGAVPPRIVADPDNSALLLLDLSHNRFSGEIPAGIAAVRSLQGLFLADNQLSGDIPPGIGNLTYLQVLDLSNNRLSGSVPAGLAGCFQLLYLQLGGNQLSGALRPELDALASLKVLDLSNNKISGEIPLPLAGCRSLEVVDLSGNEISGELSSAVAKWLSLKFLSLAGNQLSGHLPDWMFSFPLLQWLDLSSNKFVGFIPDGGFNVSEVLNGGGGQGTPSESVLPPQLFVSASVDTVSWQLDLGYDVQATTGIDLSGNELCGEIPEGLVDMKGLEYLNLSCNYLAGQIPAGLGGMGRLHTLDFSHNGLSGEVPPGIAAMTVLEVLNLSYNSLSGPLPTTKFPGALAGNPGICSGKGCSENARTPEGKMEGSNHRGWLGGWHGENGWVSLGAFCISTMTSFYVSLATLLCSSNARNFVFRPVRVEY.

The first 28 residues, 1-28 (MLTATPLPHQLLATFLLVLASATQPAVP), serve as a signal peptide directing secretion. The Extracellular segment spans residues 29–573 (ASTDRAALLA…WLGGWHGENG (545 aa)). LRR repeat units lie at residues 79–103 (TPSVAELSLRGLNLTGVIPAAPLAL), 104–128 (LRRLRTLDLSANALSGELPCSLPRS), 130–150 (LALDLSRNALSGAVPTCLPSS), 151–176 (LPALRTLNLSANFLRLPLSPRLSFPA), 178–199 (LAALDLSRNAISGAVPPRIVAD), 202–226 (NSALLLLDLSHNRFSGEIPAGIAAV), 227–250 (RSLQGLFLADNQLSGDIPPGIGNL), 251–274 (TYLQVLDLSNNRLSGSVPAGLAGC), 276–297 (QLLYLQLGGNQLSGALRPELDA), 298–322 (LASLKVLDLSNNKISGEIPLPLAGC), 324–346 (SLEVVDLSGNEISGELSSAVAKW), 347–370 (LSLKFLSLAGNQLSGHLPDWMFSF), 372–394 (LLQWLDLSSNKFVGFIPDGGFNV), 435–459 (VQATTGIDLSGNELCGEIPEGLVDM), 460–483 (KGLEYLNLSCNYLAGQIPAGLGGM), 484–507 (GRLHTLDFSHNGLSGEVPPGIAAM), and 508–531 (TVLEVLNLSYNSLSGPLPTTKFPG). Asn-91 carries an N-linked (GlcNAc...) asparagine glycan. The N-linked (GlcNAc...) asparagine glycan is linked to Asn-158. The N-linked (GlcNAc...) asparagine glycan is linked to Asn-249. N-linked (GlcNAc...) asparagine glycosylation occurs at Asn-393. A glycan (N-linked (GlcNAc...) asparagine) is linked at Asn-466. Asn-514 carries N-linked (GlcNAc...) asparagine glycosylation. A helical transmembrane segment spans residues 574-597 (WVSLGAFCISTMTSFYVSLATLLC). Topologically, residues 598–613 (SSNARNFVFRPVRVEY) are cytoplasmic.

As to expression, expressed in ear primordia, vegetative apex and young leaf tissues. Barely detected in expanded leaf tissues and not expressed in roots.

The protein localises to the cell membrane. Functionally, receptor-like protein that regulates shoot meristem proliferation. Based on additive and synergistic phenotypes of double mutants, it is probable that unlike CLV1 and CLV2 in A.thaliana, FAE2 and TD1 do not function exclusively in a single pathway. This Zea mays (Maize) protein is Leucine-rich repeat receptor-like protein FASCIATED EAR2 (FEA2).